Reading from the N-terminus, the 578-residue chain is SCARECROW-LIKE protein 7 (578 aa).

Residues 18–29 (VIQQQQQQQQQQ) show a composition bias toward low complexity. 2 disordered regions span residues 18–84 (VIQQ…LAYG) and 146–173 (PPPPVPSPPPTHAAATATATAATAAPRP). Residues 49–61 (PHHHQQKHHHHHQ) are compositionally biased toward basic residues. Low complexity predominate over residues 62–74 (QMPAMPQAPPSSH). A compositionally biased stretch (pro residues) spans 146–156 (PPPPVPSPPPT). Low complexity predominate over residues 157–173 (HAAATATATAATAAPRP). A GRAS domain is found at 198–578 (SADASCSAPI…RPLLTVSAWR (381 aa)). The leucine repeat I (LRI) stretch occupies residues 205-264 (APILQSLLSCSRAAATDPGLAAAELASVRAAATDAGDPSERLAFYFADALSRRLACGTGA). A VHIID region spans residues 283 to 349 (YKTLNDACPY…GKPTRIRITG (67 aa)). A VHIID motif is present at residues 314 to 318 (IHIVD). The leucine repeat II (LRII) stretch occupies residues 365–397 (ATNTRLRDFAKLLGVDFEFVPLLRPVHELNKSD). Positions 406-497 (VAVNFMLQLY…RWMFGERIQR (92 aa)) are PFYRE. Residues 414–418 (LYHLL) carry the LXXLL motif motif. An SAW region spans residues 500–578 (GPEEGADRTE…RPLLTVSAWR (79 aa)).

The protein belongs to the GRAS family. In terms of assembly, homodimer.

The protein localises to the nucleus. Probable transcription factor involved in plant development. Involved in environmental abiotic stress resistance. May increase the expression of stress-responsive genes. Binds DNA in vitro. This Oryza sativa subsp. japonica (Rice) protein is SCARECROW-LIKE protein 7.